A 546-amino-acid polypeptide reads, in one-letter code: Delta-1-pyrroline-5-carboxylate dehydrogenase (546 aa).

279 to 284 (KDISSN) lines the NAD(+) pocket. Catalysis depends on E297, which acts as the Proton acceptor. The active-site Nucleophile is the C331.

The protein belongs to the aldehyde dehydrogenase family.

Its subcellular location is the cytoplasm. It catalyses the reaction L-glutamate 5-semialdehyde + NAD(+) + H2O = L-glutamate + NADH + 2 H(+). It functions in the pathway amino-acid degradation; L-proline degradation into L-glutamate; L-glutamate from L-proline: step 2/2. The polypeptide is Delta-1-pyrroline-5-carboxylate dehydrogenase (pruA) (Agaricus bisporus (White button mushroom)).